Reading from the N-terminus, the 80-residue chain is Acyl carrier protein (80 aa).

The 79-residue stretch at 1 to 79 (MTEEEIFNKI…EAVEYIKSHQ (79 aa)) folds into the Carrier domain. S39 bears the O-(pantetheine 4'-phosphoryl)serine mark.

Belongs to the acyl carrier protein (ACP) family. Post-translationally, 4'-phosphopantetheine is transferred from CoA to a specific serine of apo-ACP by AcpS. This modification is essential for activity because fatty acids are bound in thioester linkage to the sulfhydryl of the prosthetic group.

It localises to the cytoplasm. It functions in the pathway lipid metabolism; fatty acid biosynthesis. Functionally, carrier of the growing fatty acid chain in fatty acid biosynthesis. The polypeptide is Acyl carrier protein (Lactobacillus johnsonii (strain CNCM I-12250 / La1 / NCC 533)).